The primary structure comprises 152 residues: UPF0266 membrane protein YobD (152 aa).

Transmembrane regions (helical) follow at residues Leu-6–Met-26, Val-45–His-65, and Ala-67–Ile-87.

Belongs to the UPF0266 family.

The protein resides in the cell inner membrane. This Salmonella enteritidis PT4 (strain P125109) protein is UPF0266 membrane protein YobD.